The sequence spans 251 residues: Imidazole glycerol phosphate synthase subunit HisF (251 aa).

Catalysis depends on residues aspartate 11 and aspartate 130.

This sequence belongs to the HisA/HisF family. As to quaternary structure, heterodimer of HisH and HisF.

It is found in the cytoplasm. It carries out the reaction 5-[(5-phospho-1-deoxy-D-ribulos-1-ylimino)methylamino]-1-(5-phospho-beta-D-ribosyl)imidazole-4-carboxamide + L-glutamine = D-erythro-1-(imidazol-4-yl)glycerol 3-phosphate + 5-amino-1-(5-phospho-beta-D-ribosyl)imidazole-4-carboxamide + L-glutamate + H(+). It participates in amino-acid biosynthesis; L-histidine biosynthesis; L-histidine from 5-phospho-alpha-D-ribose 1-diphosphate: step 5/9. Its function is as follows. IGPS catalyzes the conversion of PRFAR and glutamine to IGP, AICAR and glutamate. The HisF subunit catalyzes the cyclization activity that produces IGP and AICAR from PRFAR using the ammonia provided by the HisH subunit. This chain is Imidazole glycerol phosphate synthase subunit HisF, found in Listeria monocytogenes serotype 4b (strain CLIP80459).